Consider the following 187-residue polypeptide: Endoribonuclease YbeY (187 aa).

Zn(2+) is bound by residues H148, H152, and H158.

Belongs to the endoribonuclease YbeY family. Requires Zn(2+) as cofactor.

It is found in the cytoplasm. Functionally, single strand-specific metallo-endoribonuclease involved in late-stage 70S ribosome quality control and in maturation of the 3' terminus of the 16S rRNA. This Ralstonia nicotianae (strain ATCC BAA-1114 / GMI1000) (Ralstonia solanacearum) protein is Endoribonuclease YbeY.